The following is a 303-amino-acid chain: uncharacterized protein (303 aa).

This is an uncharacterized protein from Archaeoglobus fulgidus (strain ATCC 49558 / DSM 4304 / JCM 9628 / NBRC 100126 / VC-16).